Reading from the N-terminus, the 346-residue chain is Methylthioribose-1-phosphate isomerase (346 aa).

Residues 45–47 (RGA), Arg-87, and Gln-194 contribute to the substrate site. Asp-235 functions as the Proton donor in the catalytic mechanism. 245–246 (NK) contacts substrate.

It belongs to the eIF-2B alpha/beta/delta subunits family. MtnA subfamily.

It catalyses the reaction 5-(methylsulfanyl)-alpha-D-ribose 1-phosphate = 5-(methylsulfanyl)-D-ribulose 1-phosphate. It functions in the pathway amino-acid biosynthesis; L-methionine biosynthesis via salvage pathway; L-methionine from S-methyl-5-thio-alpha-D-ribose 1-phosphate: step 1/6. In terms of biological role, catalyzes the interconversion of methylthioribose-1-phosphate (MTR-1-P) into methylthioribulose-1-phosphate (MTRu-1-P). The polypeptide is Methylthioribose-1-phosphate isomerase (Syntrophomonas wolfei subsp. wolfei (strain DSM 2245B / Goettingen)).